The sequence spans 388 residues: MINKSNLIGLTCISFLSYALTGALITITGIFLENISKYFNIPITDMGNTFTFLNAGILSSIFISSWITNIINLKTQLIFGFILTIIATLILIFSHNLTYFSISMFMLGIISGITMSIGTYIITNLYTDQTRASMLLLTDSFFSMSGIIFPIITALIISNNMKWYWVYFIIGIIYLIIFLITINTKFPIIYTEISKKRIKTWNFSILCLSISALLYILGQLSFISWMPEYTMKYIHISINQSSKLVSAFWMAYMVGMWIFSFILKFFDLKKTIITLSGISLFLMSLFNIFYDYALLYIIILSLGFFSSAIYTIIITLASQQTPLSSPKTINYILTSGTVGTLLTFIITGPIVQKYGIFSALLVSNILYGIVFFLVIIFATLTKTKPIHD.

12 helical membrane passes run Cys-12 to Leu-32, Thr-51 to Ile-71, Leu-77 to Leu-97, Ile-102 to Ile-122, Leu-137 to Ile-157, Trp-163 to Asn-183, Phe-203 to Ile-223, Ser-246 to Phe-266, Ile-272 to Tyr-292, Leu-294 to Ile-314, Tyr-331 to Val-351, and Ile-356 to Ile-376.

This sequence belongs to the major facilitator superfamily. TsgA family.

Its subcellular location is the cell membrane. In Buchnera aphidicola subsp. Baizongia pistaciae (strain Bp), this protein is Protein TsgA homolog.